A 374-amino-acid polypeptide reads, in one-letter code: Cell division protein DivIB (374 aa).

Residues 1 to 90 (MWKISNENDI…EEEHFADRLP (90 aa)) are disordered. Over 1–103 (MWKISNENDI…KTRNKRLYRR (103 aa)) the chain is Cytoplasmic. Positions 39 to 53 (YLKKQAEEAASKGEN) are enriched in basic and acidic residues. Over residues 56 to 75 (AEVTITLQEQSQEEPQQHLP) the composition is skewed to polar residues. The helical transmembrane segment at 104–124 (LAFILTCLGTAILVALYFVSP) threads the bilayer. Topologically, residues 125–374 (LSRLSEVTVS…GENQEVQQAE (250 aa)) are extracellular. Positions 126 to 197 (SRLSEVTVSG…NSFKIDIQEY (72 aa)) constitute a POTRA domain. The segment at 325–374 (KESEETGSEVSEDSAVENQEVVDPNAGVATDEANNGTPTNGENQEVQQAE) is disordered. The span at 326–339 (ESEETGSEVSEDSA) shows a compositional bias: acidic residues. A compositionally biased stretch (polar residues) spans 356–374 (EANNGTPTNGENQEVQQAE).

The protein belongs to the FtsQ/DivIB family. DivIB subfamily.

It localises to the cell membrane. Cell division protein that may be involved in stabilizing or promoting the assembly of the division complex. The polypeptide is Cell division protein DivIB (Enterococcus faecalis (strain ATCC 700802 / V583)).